We begin with the raw amino-acid sequence, 241 residues long: MEYVNPEGLRLDGRRFNEMRQIVAEVGVVSKADGSAVFEMGNTKVIAAVYGPREIQNKSQQKKNDHAVVLCEYSMAQFSTGDRRRQKFDRRSTELSLVIRQTMEACILTELMPHSQIDIFLQVLQADGGTRSACINAATLALADAGIPMRDLAVSCSAGYLNSTPLLDLNYVEDSAGGADVTVGILPKLDKVSLLQMDAKLPMETFETVFALASEGCKAIAERIREVLQENTKQLEYRRAA.

At Met1 the chain carries N-acetylmethionine.

The protein belongs to the RNase PH family. Component of the RNA exosome complex. Interacts with RPP4.

The protein resides in the cytoplasm. It localises to the nucleus. The protein localises to the nucleolus. Non-catalytic component of the RNA exosome complex which has 3'-&gt;5' exoribonuclease activity and participates in a multitude of cellular RNA processing, maturation and degradation events. In vitro, is a processive phosphorolytic exonuclease and requires a single-stranded poly(A) tail on the substrate RNA for its activity. Can complement the growth defect of a yeast mutant lacking RRP41 exonuclease. Required for normal development of female gametophytes. This Arabidopsis thaliana (Mouse-ear cress) protein is Exosome complex component RRP41 homolog.